Consider the following 152-residue polypeptide: D-aminoacyl-tRNA deacylase (152 aa).

A Gly-cisPro motif, important for rejection of L-amino acids motif is present at residues 142–143; that stretch reads GP.

Belongs to the DTD family. As to quaternary structure, homodimer.

The protein resides in the cytoplasm. The catalysed reaction is glycyl-tRNA(Ala) + H2O = tRNA(Ala) + glycine + H(+). It carries out the reaction a D-aminoacyl-tRNA + H2O = a tRNA + a D-alpha-amino acid + H(+). An aminoacyl-tRNA editing enzyme that deacylates mischarged D-aminoacyl-tRNAs. Also deacylates mischarged glycyl-tRNA(Ala), protecting cells against glycine mischarging by AlaRS. Acts via tRNA-based rather than protein-based catalysis; rejects L-amino acids rather than detecting D-amino acids in the active site. By recycling D-aminoacyl-tRNA to D-amino acids and free tRNA molecules, this enzyme counteracts the toxicity associated with the formation of D-aminoacyl-tRNA entities in vivo and helps enforce protein L-homochirality. The chain is D-aminoacyl-tRNA deacylase from Burkholderia lata (strain ATCC 17760 / DSM 23089 / LMG 22485 / NCIMB 9086 / R18194 / 383).